The chain runs to 205 residues: Recombination protein RecR (205 aa).

A C4-type zinc finger spans residues 60–75; the sequence is CKVCHNISDTETCQIC. The 96-residue stretch at 83 to 178 folds into the Toprim domain; sequence STVCVVENIR…KLSVIARGIS (96 aa).

Belongs to the RecR family.

In terms of biological role, may play a role in DNA repair. It seems to be involved in an RecBC-independent recombinational process of DNA repair. It may act with RecF and RecO. The chain is Recombination protein RecR from Bacteroides thetaiotaomicron (strain ATCC 29148 / DSM 2079 / JCM 5827 / CCUG 10774 / NCTC 10582 / VPI-5482 / E50).